A 282-amino-acid chain; its full sequence is Phosphatidylglycerol--prolipoprotein diacylglyceryl transferase (282 aa).

4 helical membrane-spanning segments follow: residues 19-39 (IGPI…LIGV), 59-79 (LSIW…VLFQ), 90-110 (IIAI…GTLA), and 120-140 (VPFW…QAIG). Arg141 lines the a 1,2-diacyl-sn-glycero-3-phospho-(1'-sn-glycerol) pocket. 3 consecutive transmembrane segments (helical) span residues 181–201 (TFLY…TLFF), 212–232 (VGTL…WIEG), and 245–265 (IAQV…AWLY).

Belongs to the Lgt family.

It is found in the cell inner membrane. It carries out the reaction L-cysteinyl-[prolipoprotein] + a 1,2-diacyl-sn-glycero-3-phospho-(1'-sn-glycerol) = an S-1,2-diacyl-sn-glyceryl-L-cysteinyl-[prolipoprotein] + sn-glycerol 1-phosphate + H(+). It functions in the pathway protein modification; lipoprotein biosynthesis (diacylglyceryl transfer). Functionally, catalyzes the transfer of the diacylglyceryl group from phosphatidylglycerol to the sulfhydryl group of the N-terminal cysteine of a prolipoprotein, the first step in the formation of mature lipoproteins. The polypeptide is Phosphatidylglycerol--prolipoprotein diacylglyceryl transferase (Trichormus variabilis (strain ATCC 29413 / PCC 7937) (Anabaena variabilis)).